The sequence spans 52 residues: Repressor-like protein SSo7c3 (52 aa).

The SpoVT-AbrB domain occupies 4–51 (EEVVKVSRNYQVTIPAKVRQKFPVKEGDLVKVIYDENGGVVKIQILDS).

In Saccharolobus solfataricus (strain ATCC 35092 / DSM 1617 / JCM 11322 / P2) (Sulfolobus solfataricus), this protein is Repressor-like protein SSo7c3.